The chain runs to 61 residues: Short neurotoxin 1 (61 aa).

Residues 1–16 (LECHNQQSSQPPTTKS) are compositionally biased toward polar residues. The segment at 1–20 (LECHNQQSSQPPTTKSCPGD) is disordered. Disulfide bonds link Cys3–Cys23, Cys17–Cys40, Cys42–Cys53, and Cys54–Cys59.

It belongs to the three-finger toxin family. Short-chain subfamily. Type I alpha-neurotoxin sub-subfamily. Expressed by the venom gland.

The protein localises to the secreted. Its function is as follows. Binds to muscle nicotinic acetylcholine receptor (nAChR) and inhibit acetylcholine from binding to the receptor, thereby impairing neuromuscular transmission. This Hemachatus haemachatus (Rinkhals) protein is Short neurotoxin 1.